We begin with the raw amino-acid sequence, 931 residues long: Protein translocase subunit SecA (931 aa).

Residues Gln-87, 105–109, and Asp-523 each bind ATP; that span reads GEGKT. Cys-915, Cys-917, Cys-926, and His-927 together coordinate Zn(2+).

This sequence belongs to the SecA family. As to quaternary structure, monomer and homodimer. Part of the essential Sec protein translocation apparatus which comprises SecA, SecYEG and auxiliary proteins SecDF-YajC and YidC. Zn(2+) serves as cofactor.

The protein resides in the cell inner membrane. The protein localises to the cytoplasm. It catalyses the reaction ATP + H2O + cellular proteinSide 1 = ADP + phosphate + cellular proteinSide 2.. Its function is as follows. Part of the Sec protein translocase complex. Interacts with the SecYEG preprotein conducting channel. Has a central role in coupling the hydrolysis of ATP to the transfer of proteins into and across the cell membrane, serving both as a receptor for the preprotein-SecB complex and as an ATP-driven molecular motor driving the stepwise translocation of polypeptide chains across the membrane. The sequence is that of Protein translocase subunit SecA from Xanthobacter autotrophicus (strain ATCC BAA-1158 / Py2).